Here is a 557-residue protein sequence, read N- to C-terminus: Putative UDP-glucuronate:xylan alpha-glucuronosyltransferase 4 (557 aa).

Residues 11 to 31 (KIFMIYLILVSLSLLGLILPF) form a helical; Signal-anchor for type II membrane protein membrane-spanning segment. Mn(2+)-binding residues include D365 and D367. Substrate-binding positions include 365 to 367 (DAD), 394 to 396 (NSG), 421 to 425 (NGGDQ), and 466 to 471 (HYLGLK). H466 is a binding site for Mn(2+).

The protein belongs to the glycosyltransferase 8 family. Glycogenin subfamily. Mn(2+) serves as cofactor.

Its subcellular location is the golgi apparatus membrane. In terms of biological role, may be involved in the substitutions of the xylan backbone in stem glucuronoxylan. The sequence is that of Putative UDP-glucuronate:xylan alpha-glucuronosyltransferase 4 (GUX4) from Arabidopsis thaliana (Mouse-ear cress).